The sequence spans 388 residues: 5-hydroxytryptamine receptor 4 (388 aa).

Residues Met1–Lys19 are Extracellular-facing. N-linked (GlcNAc...) asparagine glycosylation occurs at Asn7. The chain crosses the membrane as a helical span at residues Val20–Val44. Residues Cys45–Lys54 lie on the Cytoplasmic side of the membrane. The helical transmembrane segment at Thr55–Ala78 threads the bilayer. At Ile79–Phe92 the chain is on the extracellular side. Residues Cys93 to Asp117 form a helical membrane-spanning segment. Cys93 and Cys184 are disulfide-bonded. Asp100 is a binding site for serotonin. At Arg118–Met133 the chain is on the cytoplasmic side. A helical transmembrane segment spans residues Thr134 to Ile157. Over Met158 to Val188 the chain is Extracellular. A helical transmembrane segment spans residues Asn189 to Tyr212. Topologically, residues Tyr213–Ala257 are cytoplasmic. The chain crosses the membrane as a helical span at residues Ala258 to Pro283. A serotonin-binding site is contributed by Asn279. Residues Phe284–Pro290 lie on the Extracellular side of the membrane. A helical membrane pass occupies residues Gly291–Phe314. Residues Leu315–Thr388 are Cytoplasmic-facing.

Belongs to the G-protein coupled receptor 1 family. In terms of assembly, interacts (via C-terminus 330-346 AA) with GRK5; this interaction is promoted by 5-HT (serotonin).

The protein resides in the cell membrane. Its subcellular location is the endosome membrane. In terms of biological role, G-protein coupled receptor for 5-hydroxytryptamine (serotonin), a biogenic hormone that functions as a neurotransmitter, a hormone and a mitogen. Ligand binding causes a conformation change that triggers signaling via guanine nucleotide-binding proteins (G proteins) and modulates the activity of downstream effectors. HTR4 is coupled to G(s) G alpha proteins and mediates activation of adenylate cyclase activity. The chain is 5-hydroxytryptamine receptor 4 (HTR4) from Cavia porcellus (Guinea pig).